A 309-amino-acid chain; its full sequence is Tagatose-6-phosphate kinase (309 aa).

This sequence belongs to the carbohydrate kinase PfkB family. LacC subfamily.

The catalysed reaction is D-tagatofuranose 6-phosphate + ATP = D-tagatofuranose 1,6-bisphosphate + ADP + H(+). It participates in carbohydrate metabolism; D-tagatose 6-phosphate degradation; D-glyceraldehyde 3-phosphate and glycerone phosphate from D-tagatose 6-phosphate: step 1/2. The chain is Tagatose-6-phosphate kinase from Streptococcus pyogenes serotype M3 (strain SSI-1).